The sequence spans 293 residues: Proline iminopeptidase (293 aa).

The 250-residue stretch at 28-277 (PLVLLHGGPG…NCSHMSFVQK (250 aa)) folds into the AB hydrolase-1 domain. Residue S105 is the Nucleophile of the active site. D244 is an active-site residue. H271 functions as the Proton donor in the catalytic mechanism.

This sequence belongs to the peptidase S33 family.

The protein localises to the cell envelope. The catalysed reaction is Release of N-terminal proline from a peptide.. Its function is as follows. Releases the N-terminal proline from various substrates. This chain is Proline iminopeptidase, found in Lactobacillus acidophilus (strain ATCC 700396 / NCK56 / N2 / NCFM).